The sequence spans 147 residues: Diaminohydroxyphosphoribosylamino-pyrimidine deaminase (147 aa).

Residues 1 to 122 (MKDRFYMTRA…LYLRKKGISV (122 aa)) enclose the CMP/dCMP-type deaminase domain. A Zn(2+)-binding site is contributed by His-50. Residue Glu-52 is the Proton donor of the active site. Positions 75 and 84 each coordinate Zn(2+).

Belongs to the cytidine and deoxycytidylate deaminase family. Zn(2+) is required as a cofactor.

The enzyme catalyses 2,5-diamino-6-hydroxy-4-(5-phosphoribosylamino)-pyrimidine + H2O + H(+) = 5-amino-6-(5-phospho-D-ribosylamino)uracil + NH4(+). It functions in the pathway cofactor biosynthesis; riboflavin biosynthesis; 5-amino-6-(D-ribitylamino)uracil from GTP: step 2/4. The chain is Diaminohydroxyphosphoribosylamino-pyrimidine deaminase (ribD1) from Buchnera aphidicola subsp. Schizaphis graminum (strain Sg).